The primary structure comprises 332 residues: Probable cation efflux system protein MT2084 (332 aa).

The next 5 membrane-spanning stretches (helical) occupy residues 46 to 66 (ISLL…VMSG), 75 to 95 (IHNF…ALGA), 113 to 133 (AGSF…YEAI), 145 to 165 (VGWV…VALY), and 202 to 222 (VALG…AAIL).

The protein belongs to the cation diffusion facilitator (CDF) transporter (TC 2.A.4) family.

Its subcellular location is the cell membrane. The polypeptide is Probable cation efflux system protein MT2084 (Mycobacterium tuberculosis (strain CDC 1551 / Oshkosh)).